The primary structure comprises 217 residues: Somatotropin (217 aa).

An N-terminal signal peptide occupies residues 1-26 (MMAAGPRTSLLLAFALLCLPWTQVVG). Histidine 46 is a binding site for Zn(2+). A disulfide bond links cysteine 79 and cysteine 190. Serine 132 bears the Phosphoserine mark. Position 199 (glutamate 199) interacts with Zn(2+). The cysteines at positions 207 and 215 are disulfide-linked.

The protein belongs to the somatotropin/prolactin family.

Its subcellular location is the secreted. Plays an important role in growth control. Its major role in stimulating body growth is to stimulate the liver and other tissues to secrete IGF1. It stimulates both the differentiation and proliferation of myoblasts. It also stimulates amino acid uptake and protein synthesis in muscle and other tissues. This is Somatotropin (GH1) from Bubalus bubalis (Domestic water buffalo).